The following is a 205-amino-acid chain: Holliday junction branch migration complex subunit RuvA (205 aa).

Residues 1–64 form a domain I region; the sequence is MIGRIRGLLI…EDAQLLYGFI (64 aa). The domain II stretch occupies residues 65 to 143; it reads SKQERSLFRL…SLMEASVGSE (79 aa). The interval 144–156 is flexible linker; the sequence is REFMLQSNYTAPE. Positions 157–205 are domain III; the sequence is AVNTAEEDAIAALLSLGYKPAQASKAVSSVYTDGMSSETLIKSALKSML.

This sequence belongs to the RuvA family. As to quaternary structure, homotetramer. Forms an RuvA(8)-RuvB(12)-Holliday junction (HJ) complex. HJ DNA is sandwiched between 2 RuvA tetramers; dsDNA enters through RuvA and exits via RuvB. An RuvB hexamer assembles on each DNA strand where it exits the tetramer. Each RuvB hexamer is contacted by two RuvA subunits (via domain III) on 2 adjacent RuvB subunits; this complex drives branch migration. In the full resolvosome a probable DNA-RuvA(4)-RuvB(12)-RuvC(2) complex forms which resolves the HJ.

It localises to the cytoplasm. Its function is as follows. The RuvA-RuvB-RuvC complex processes Holliday junction (HJ) DNA during genetic recombination and DNA repair, while the RuvA-RuvB complex plays an important role in the rescue of blocked DNA replication forks via replication fork reversal (RFR). RuvA specifically binds to HJ cruciform DNA, conferring on it an open structure. The RuvB hexamer acts as an ATP-dependent pump, pulling dsDNA into and through the RuvAB complex. HJ branch migration allows RuvC to scan DNA until it finds its consensus sequence, where it cleaves and resolves the cruciform DNA. This is Holliday junction branch migration complex subunit RuvA from Shewanella halifaxensis (strain HAW-EB4).